Here is a 440-residue protein sequence, read N- to C-terminus: Tyrosine--tRNA ligase (440 aa).

Tyr46 lines the L-tyrosine pocket. Residues 51 to 60 (PTAPSLHIGN) carry the 'HIGH' region motif. The L-tyrosine site is built by Tyr181 and Gln185. Residues 241–245 (KFGKS) carry the 'KMSKS' region motif. Lys244 serves as a coordination point for ATP. The region spanning 373–430 (DRIAQAGVSAGLFKSISEARKTIKSGGVYVNNVRVEDEEQLLGDGDFLKGRFVVLRRG) is the S4 RNA-binding domain.

Belongs to the class-I aminoacyl-tRNA synthetase family. TyrS type 1 subfamily. Homodimer.

Its subcellular location is the cytoplasm. The enzyme catalyses tRNA(Tyr) + L-tyrosine + ATP = L-tyrosyl-tRNA(Tyr) + AMP + diphosphate + H(+). Catalyzes the attachment of tyrosine to tRNA(Tyr) in a two-step reaction: tyrosine is first activated by ATP to form Tyr-AMP and then transferred to the acceptor end of tRNA(Tyr). This chain is Tyrosine--tRNA ligase, found in Bifidobacterium animalis subsp. lactis (strain AD011).